Consider the following 295-residue polypeptide: Light-independent protochlorophyllide reductase iron-sulfur ATP-binding protein (295 aa).

ATP contacts are provided by residues 39–44 (GIGKST) and K68. S43 contributes to the Mg(2+) binding site. [4Fe-4S] cluster contacts are provided by C124 and C158. Residues 209-210 (NR) and 233-235 (PDL) each bind ATP.

This sequence belongs to the NifH/BchL/ChlL family. In terms of assembly, homodimer. Protochlorophyllide reductase is composed of three subunits; BchL, BchN and BchB. [4Fe-4S] cluster serves as cofactor.

The catalysed reaction is chlorophyllide a + oxidized 2[4Fe-4S]-[ferredoxin] + 2 ADP + 2 phosphate = protochlorophyllide a + reduced 2[4Fe-4S]-[ferredoxin] + 2 ATP + 2 H2O. Its pathway is porphyrin-containing compound metabolism; bacteriochlorophyll biosynthesis (light-independent). Component of the dark-operative protochlorophyllide reductase (DPOR) that uses Mg-ATP and reduced ferredoxin to reduce ring D of protochlorophyllide (Pchlide) to form chlorophyllide a (Chlide). This reaction is light-independent. The L component serves as a unique electron donor to the NB-component of the complex, and binds Mg-ATP. The polypeptide is Light-independent protochlorophyllide reductase iron-sulfur ATP-binding protein (Rhodospirillum rubrum (strain ATCC 11170 / ATH 1.1.1 / DSM 467 / LMG 4362 / NCIMB 8255 / S1)).